The chain runs to 645 residues: DNA mismatch repair protein MutL (645 aa).

Disordered stretches follow at residues 353–381 (RPENQLGGSVPAAAEPRPTGPDAGEFGPQ) and 395–420 (QGEPFARPAGGGSGSGYQYSPRPTTG).

Belongs to the DNA mismatch repair MutL/HexB family.

Its function is as follows. This protein is involved in the repair of mismatches in DNA. It is required for dam-dependent methyl-directed DNA mismatch repair. May act as a 'molecular matchmaker', a protein that promotes the formation of a stable complex between two or more DNA-binding proteins in an ATP-dependent manner without itself being part of a final effector complex. The sequence is that of DNA mismatch repair protein MutL from Pseudomonas syringae pv. tomato (strain ATCC BAA-871 / DC3000).